The sequence spans 88 residues: Small ribosomal subunit protein uS17 (88 aa).

The protein belongs to the universal ribosomal protein uS17 family. Part of the 30S ribosomal subunit.

Functionally, one of the primary rRNA binding proteins, it binds specifically to the 5'-end of 16S ribosomal RNA. In Levilactobacillus brevis (strain ATCC 367 / BCRC 12310 / CIP 105137 / JCM 1170 / LMG 11437 / NCIMB 947 / NCTC 947) (Lactobacillus brevis), this protein is Small ribosomal subunit protein uS17.